The chain runs to 150 residues: MRVIIQRVSQASVTVEGQKTADIQKGLLVLVGIEDADTQEDIDWLTGKIIKMRIFGDENDVMNCSVQDVDGDIIVVSQFTLHASTKKGNRPSYIKAAKPDFAIPMYENFVKSLEKEFGKKIQTGIFGADMKVNLLNDGPVTIVMDSKNRE.

The short motif at 138-139 (GP) is the Gly-cisPro motif, important for rejection of L-amino acids element.

This sequence belongs to the DTD family. Homodimer.

Its subcellular location is the cytoplasm. The enzyme catalyses glycyl-tRNA(Ala) + H2O = tRNA(Ala) + glycine + H(+). It carries out the reaction a D-aminoacyl-tRNA + H2O = a tRNA + a D-alpha-amino acid + H(+). Functionally, an aminoacyl-tRNA editing enzyme that deacylates mischarged D-aminoacyl-tRNAs. Also deacylates mischarged glycyl-tRNA(Ala), protecting cells against glycine mischarging by AlaRS. Acts via tRNA-based rather than protein-based catalysis; rejects L-amino acids rather than detecting D-amino acids in the active site. By recycling D-aminoacyl-tRNA to D-amino acids and free tRNA molecules, this enzyme counteracts the toxicity associated with the formation of D-aminoacyl-tRNA entities in vivo and helps enforce protein L-homochirality. The polypeptide is D-aminoacyl-tRNA deacylase (Flavobacterium johnsoniae (strain ATCC 17061 / DSM 2064 / JCM 8514 / BCRC 14874 / CCUG 350202 / NBRC 14942 / NCIMB 11054 / UW101) (Cytophaga johnsonae)).